The sequence spans 294 residues: Acetyl-coenzyme A carboxylase carboxyl transferase subunit beta (294 aa).

The CoA carboxyltransferase N-terminal domain maps to 27–294 (LWHKCPSCDA…PSPVALPVTA (268 aa)). Zn(2+)-binding residues include cysteine 31, cysteine 34, cysteine 50, and cysteine 53. Residues 31–53 (CPSCDAVLYRPELEKTLDVCPKC) form a C4-type zinc finger.

The protein belongs to the AccD/PCCB family. In terms of assembly, acetyl-CoA carboxylase is a heterohexamer composed of biotin carboxyl carrier protein (AccB), biotin carboxylase (AccC) and two subunits each of ACCase subunit alpha (AccA) and ACCase subunit beta (AccD). It depends on Zn(2+) as a cofactor.

It localises to the cytoplasm. It carries out the reaction N(6)-carboxybiotinyl-L-lysyl-[protein] + acetyl-CoA = N(6)-biotinyl-L-lysyl-[protein] + malonyl-CoA. The protein operates within lipid metabolism; malonyl-CoA biosynthesis; malonyl-CoA from acetyl-CoA: step 1/1. In terms of biological role, component of the acetyl coenzyme A carboxylase (ACC) complex. Biotin carboxylase (BC) catalyzes the carboxylation of biotin on its carrier protein (BCCP) and then the CO(2) group is transferred by the transcarboxylase to acetyl-CoA to form malonyl-CoA. In Ectopseudomonas mendocina (strain ymp) (Pseudomonas mendocina), this protein is Acetyl-coenzyme A carboxylase carboxyl transferase subunit beta.